The primary structure comprises 523 residues: MTLQEEIKKRRTFAIISHPDAGKTTITEQLLKFGGAIREAGTVKARKTGNFAKSDWMDIEKERGISVTSSVMQFDYAGKRVNILDTPGHEDFSEDTYRTLMAVDAAVMVIDSAKGIEAQTKKLFQVVKRRGIPVFTFINKLDRDGREPLDLLSELEEILGIASVPMNWPIGMGKNFQGLYDFTHGRVEVYQPEDGKRFVEFDENGEVPTSHPLTKNPFFTQALEDAELLLDAGNQFSEDEVVAGQLTPVFFGSALTSFGVETFLETFLEYAPEPHSHKTVDEEEIEPLNPDFSGFIFKIQANMDPRHRDRIAFVRIVSGEFERGMDVNLVRTGKKVKLSNVTQFMAESRENVENAVAGDIIGVYDTGTYQVGDTLTTGKLKKSFEPLPTFTPELFMRVQAKNVMKQKSFQKGIDQLVQEGAIQLYKSYTTGDIMLGAVGQLQFEVFKDRMEREYNSETIMTPMGSKTVRWIKEEDLDEKMSSSRNILARDRFDHPLFLFENEFAMRWFKDKYPDIELMEQFSV.

Residues Lys8 to His275 enclose the tr-type G domain. GTP-binding positions include Ser17–Thr24, Asp85–His89, and Asn139–Asp142.

It belongs to the TRAFAC class translation factor GTPase superfamily. Classic translation factor GTPase family. PrfC subfamily.

The protein localises to the cytoplasm. Functionally, increases the formation of ribosomal termination complexes and stimulates activities of RF-1 and RF-2. It binds guanine nucleotides and has strong preference for UGA stop codons. It may interact directly with the ribosome. The stimulation of RF-1 and RF-2 is significantly reduced by GTP and GDP, but not by GMP. This Lactococcus lactis subsp. cremoris (strain SK11) protein is Peptide chain release factor 3.